The following is a 184-amino-acid chain: ATP synthase subunit b, chloroplastic (184 aa).

Residues 31 to 49 (IINSSVVLSVLIYFGKGVL) traverse the membrane as a helical segment.

It belongs to the ATPase B chain family. As to quaternary structure, F-type ATPases have 2 components, F(1) - the catalytic core - and F(0) - the membrane proton channel. F(1) has five subunits: alpha(3), beta(3), gamma(1), delta(1), epsilon(1). F(0) has four main subunits: a(1), b(1), b'(1) and c(10-14). The alpha and beta chains form an alternating ring which encloses part of the gamma chain. F(1) is attached to F(0) by a central stalk formed by the gamma and epsilon chains, while a peripheral stalk is formed by the delta, b and b' chains.

The protein localises to the plastid. Its subcellular location is the chloroplast thylakoid membrane. F(1)F(0) ATP synthase produces ATP from ADP in the presence of a proton or sodium gradient. F-type ATPases consist of two structural domains, F(1) containing the extramembraneous catalytic core and F(0) containing the membrane proton channel, linked together by a central stalk and a peripheral stalk. During catalysis, ATP synthesis in the catalytic domain of F(1) is coupled via a rotary mechanism of the central stalk subunits to proton translocation. In terms of biological role, component of the F(0) channel, it forms part of the peripheral stalk, linking F(1) to F(0). This Pinus thunbergii (Japanese black pine) protein is ATP synthase subunit b, chloroplastic.